We begin with the raw amino-acid sequence, 433 residues long: Dihydrolipoyllysine-residue acetyltransferase component of pyruvate dehydrogenase complex (433 aa).

The region spanning 2–77 is the Lipoyl-binding domain; it reads AFEFRLPDIG…VVGDVIVKID (76 aa). The residue at position 43 (K43) is an N6-lipoyllysine. Disordered regions lie at residues 80–134 and 164–204; these read DAEE…PSVR and YLNG…FPET. 2 stretches are compositionally biased toward basic and acidic residues: residues 84–103 and 117–126; these read MQFKGHGDDEDSKKEEKEQE and EKTEVDESKT. The Peripheral subunit-binding (PSBD) domain occupies 128–165; the sequence is KAMPSVRKYARENGVNIKAVNGSGKNGRITKEDIDAYL. The segment covering 166–185 has biased composition (low complexity); that stretch reads NGGSSEEGSNTSAASESTSS. H404 is an active-site residue.

Belongs to the 2-oxoacid dehydrogenase family. In terms of assembly, forms a 24-polypeptide structural core with octahedral symmetry. Requires (R)-lipoate as cofactor.

The enzyme catalyses N(6)-[(R)-dihydrolipoyl]-L-lysyl-[protein] + acetyl-CoA = N(6)-[(R)-S(8)-acetyldihydrolipoyl]-L-lysyl-[protein] + CoA. The pyruvate dehydrogenase complex catalyzes the overall conversion of pyruvate to acetyl-CoA and CO(2). It contains multiple copies of three enzymatic components: pyruvate dehydrogenase (E1), dihydrolipoamide acetyltransferase (E2) and lipoamide dehydrogenase (E3). The polypeptide is Dihydrolipoyllysine-residue acetyltransferase component of pyruvate dehydrogenase complex (pdhC) (Staphylococcus epidermidis (strain ATCC 35984 / DSM 28319 / BCRC 17069 / CCUG 31568 / BM 3577 / RP62A)).